A 79-amino-acid polypeptide reads, in one-letter code: D-alanyl carrier protein (79 aa).

The Carrier domain maps to 1–76; sequence MKEQIFDIIE…KIAARVQEKK (76 aa). An O-(pantetheine 4'-phosphoryl)serine modification is found at Ser34.

The protein belongs to the DltC family. Post-translationally, 4'-phosphopantetheine is transferred from CoA to a specific serine of apo-DCP.

Its subcellular location is the cytoplasm. Its pathway is cell wall biogenesis; lipoteichoic acid biosynthesis. Functionally, carrier protein involved in the D-alanylation of lipoteichoic acid (LTA). The loading of thioester-linked D-alanine onto DltC is catalyzed by D-alanine--D-alanyl carrier protein ligase DltA. The DltC-carried D-alanyl group is further transferred to cell membrane phosphatidylglycerol (PG) by forming an ester bond, probably catalyzed by DltD. D-alanylation of LTA plays an important role in modulating the properties of the cell wall in Gram-positive bacteria, influencing the net charge of the cell wall. The protein is D-alanyl carrier protein of Lactococcus lactis subsp. lactis (strain IL1403) (Streptococcus lactis).